Here is a 165-residue protein sequence, read N- to C-terminus: NADPH-dependent 7-cyano-7-deazaguanine reductase (165 aa).

The active-site Thioimide intermediate is the Cys56. The active-site Proton donor is Asp63. Substrate is bound by residues 78 to 80 (VES) and 97 to 98 (HE).

Belongs to the GTP cyclohydrolase I family. QueF type 1 subfamily.

It localises to the cytoplasm. It catalyses the reaction 7-aminomethyl-7-carbaguanine + 2 NADP(+) = 7-cyano-7-deazaguanine + 2 NADPH + 3 H(+). The protein operates within tRNA modification; tRNA-queuosine biosynthesis. Functionally, catalyzes the NADPH-dependent reduction of 7-cyano-7-deazaguanine (preQ0) to 7-aminomethyl-7-deazaguanine (preQ1). In Oceanobacillus iheyensis (strain DSM 14371 / CIP 107618 / JCM 11309 / KCTC 3954 / HTE831), this protein is NADPH-dependent 7-cyano-7-deazaguanine reductase.